A 395-amino-acid chain; its full sequence is Chaperone protein DnaJ 1 (395 aa).

One can recognise a J domain in the interval 10-75; that stretch reads DFYQELGVSS…AKRKEYDETR (66 aa). The CR-type zinc-finger motif lies at 164 to 242; the sequence is GVAMPLRLTS…CKGTGVTTRT (79 aa). Residues Cys177, Cys180, Cys194, Cys197, Cys216, Cys219, Cys230, and Cys233 each contribute to the Zn(2+) site. 4 CXXCXGXG motif repeats span residues 177-184, 194-201, 216-223, and 230-237; these read CTNCHGSG, CPTCNGSG, CTDCRGSG, and CEECKGTG.

It belongs to the DnaJ family. In terms of assembly, homodimer. The cofactor is Zn(2+).

It is found in the cytoplasm. Participates actively in the response to hyperosmotic and heat shock by preventing the aggregation of stress-denatured proteins and by disaggregating proteins, also in an autonomous, DnaK-independent fashion. Unfolded proteins bind initially to DnaJ; upon interaction with the DnaJ-bound protein, DnaK hydrolyzes its bound ATP, resulting in the formation of a stable complex. GrpE releases ADP from DnaK; ATP binding to DnaK triggers the release of the substrate protein, thus completing the reaction cycle. Several rounds of ATP-dependent interactions between DnaJ, DnaK and GrpE are required for fully efficient folding. Also involved, together with DnaK and GrpE, in the DNA replication of plasmids through activation of initiation proteins. The protein is Chaperone protein DnaJ 1 of Mycobacterium bovis (strain ATCC BAA-935 / AF2122/97).